A 239-amino-acid polypeptide reads, in one-letter code: Small ribosomal subunit protein uS2c (239 aa).

The protein belongs to the universal ribosomal protein uS2 family.

It is found in the plastid. The protein localises to the organellar chromatophore. In Paulinella chromatophora, this protein is Small ribosomal subunit protein uS2c (rps2).